A 233-amino-acid polypeptide reads, in one-letter code: ATP synthase subunit a (233 aa).

The next 7 helical transmembrane spans lie at 29-49, 60-80, 89-109, 115-135, 143-163, 185-205, and 206-226; these read FKHV…SFIV, LQNI…SITG, VLIV…VPGF, NINT…YIGI, IKHF…LELI, FVLI…IYFL, and FTLA…IYLK.

This sequence belongs to the ATPase A chain family. In terms of assembly, F-type ATPases have 2 components, CF(1) - the catalytic core - and CF(0) - the membrane proton channel. CF(1) has five subunits: alpha(3), beta(3), gamma(1), delta(1), epsilon(1). CF(0) has three main subunits: a(1), b(2) and c(9-12). The alpha and beta chains form an alternating ring which encloses part of the gamma chain. CF(1) is attached to CF(0) by a central stalk formed by the gamma and epsilon chains, while a peripheral stalk is formed by the delta and b chains.

It is found in the cell inner membrane. Functionally, key component of the proton channel; it plays a direct role in the translocation of protons across the membrane. The chain is ATP synthase subunit a from Oleidesulfovibrio alaskensis (strain ATCC BAA-1058 / DSM 17464 / G20) (Desulfovibrio alaskensis).